Reading from the N-terminus, the 71-residue chain is Brevinin-1CG4 (71 aa).

A signal peptide spans 1-22 (MFTLKKSLLLLFFLGTINLSLC). A propeptide spans 23–45 (EQERNADEEERRDDSDKRDVEVE) (removed in mature form). A disulfide bridge connects residues C65 and C71.

Belongs to the frog skin active peptide (FSAP) family. Brevinin subfamily. As to expression, expressed by the skin glands.

It localises to the secreted. Its function is as follows. Antimicrobial peptide active against a variety of Gram-positive and some Gram-negative bacterial strains. Has antifungal activity against C.albicans ATCC 10231 and a slime mold isolate. Has hemolytic activity against human erythrocytes. This is Brevinin-1CG4 from Amolops chunganensis (Chungan torrent frog).